The sequence spans 475 residues: Ribulose bisphosphate carboxylase large chain (475 aa).

The propeptide occupies Met1 to Ala2. Pro3 is modified (N-acetylproline). N6,N6,N6-trimethyllysine is present on Lys14. Substrate-binding residues include Asn123 and Thr173. The active-site Proton acceptor is the Lys175. Lys177 serves as a coordination point for substrate. Mg(2+)-binding residues include Lys201, Asp203, and Glu204. An N6-carboxylysine modification is found at Lys201. His294 (proton acceptor) is an active-site residue. Substrate-binding residues include Arg295, His327, and Ser379.

This sequence belongs to the RuBisCO large chain family. Type I subfamily. As to quaternary structure, heterohexadecamer of 8 large chains and 8 small chains. Requires Mg(2+) as cofactor.

It is found in the plastid. Its subcellular location is the chloroplast. It carries out the reaction 2 (2R)-3-phosphoglycerate + 2 H(+) = D-ribulose 1,5-bisphosphate + CO2 + H2O. It catalyses the reaction D-ribulose 1,5-bisphosphate + O2 = 2-phosphoglycolate + (2R)-3-phosphoglycerate + 2 H(+). Its function is as follows. RuBisCO catalyzes two reactions: the carboxylation of D-ribulose 1,5-bisphosphate, the primary event in carbon dioxide fixation, as well as the oxidative fragmentation of the pentose substrate in the photorespiration process. Both reactions occur simultaneously and in competition at the same active site. In Nephroselmis olivacea (Green alga), this protein is Ribulose bisphosphate carboxylase large chain.